The primary structure comprises 234 residues: Phosphoribosylaminoimidazole-succinocarboxamide synthase (234 aa).

Belongs to the SAICAR synthetase family.

The catalysed reaction is 5-amino-1-(5-phospho-D-ribosyl)imidazole-4-carboxylate + L-aspartate + ATP = (2S)-2-[5-amino-1-(5-phospho-beta-D-ribosyl)imidazole-4-carboxamido]succinate + ADP + phosphate + 2 H(+). Its pathway is purine metabolism; IMP biosynthesis via de novo pathway; 5-amino-1-(5-phospho-D-ribosyl)imidazole-4-carboxamide from 5-amino-1-(5-phospho-D-ribosyl)imidazole-4-carboxylate: step 1/2. In Exiguobacterium sp. (strain ATCC BAA-1283 / AT1b), this protein is Phosphoribosylaminoimidazole-succinocarboxamide synthase.